The sequence spans 211 residues: Protein CHLORORESPIRATORY REDUCTION 41, chloroplastic (211 aa).

The N-terminal 38 residues, 1–38 (MASTSTLLLPSLSSKNLHIAVPIRTNSFVRRTTKFSTK), are a transit peptide targeting the chloroplast. Residues 136–163 (AKAGEIVAERAREEAEVLRDEGKVEERM) adopt a coiled-coil conformation.

Biogenesis factor component of the plastidial NDH subcomplex A.

The protein resides in the plastid. Its subcellular location is the chloroplast. It localises to the chloroplast stroma. Required for both formation and activity of the chloroplast NAD(P)H dehydrogenase (NDH) complex of the photosynthetic electron transport chain. Functions in assembly or stabilization of the NDH complex; probably involved, together with NdhO and NdhH, in the formation of an NDH subcomplex A assembly intermediate (NAI500). The sequence is that of Protein CHLORORESPIRATORY REDUCTION 41, chloroplastic from Arabidopsis thaliana (Mouse-ear cress).